We begin with the raw amino-acid sequence, 119 residues long: Large ribosomal subunit protein uL18 (119 aa).

The protein belongs to the universal ribosomal protein uL18 family. Part of the 50S ribosomal subunit; part of the 5S rRNA/L5/L18/L25 subcomplex. Contacts the 5S and 23S rRNAs.

This is one of the proteins that bind and probably mediate the attachment of the 5S RNA into the large ribosomal subunit, where it forms part of the central protuberance. The sequence is that of Large ribosomal subunit protein uL18 from Cupriavidus necator (strain ATCC 17699 / DSM 428 / KCTC 22496 / NCIMB 10442 / H16 / Stanier 337) (Ralstonia eutropha).